The primary structure comprises 308 residues: Aspartate carbamoyltransferase catalytic subunit (308 aa).

2 residues coordinate carbamoyl phosphate: Arg57 and Thr58. Lys86 serves as a coordination point for L-aspartate. Carbamoyl phosphate contacts are provided by Arg107, His135, and Gln138. Positions 167 and 228 each coordinate L-aspartate. Leu267 and Pro268 together coordinate carbamoyl phosphate.

It belongs to the aspartate/ornithine carbamoyltransferase superfamily. ATCase family. As to quaternary structure, heterooligomer of catalytic and regulatory chains.

It catalyses the reaction carbamoyl phosphate + L-aspartate = N-carbamoyl-L-aspartate + phosphate + H(+). It functions in the pathway pyrimidine metabolism; UMP biosynthesis via de novo pathway; (S)-dihydroorotate from bicarbonate: step 2/3. Functionally, catalyzes the condensation of carbamoyl phosphate and aspartate to form carbamoyl aspartate and inorganic phosphate, the committed step in the de novo pyrimidine nucleotide biosynthesis pathway. The chain is Aspartate carbamoyltransferase catalytic subunit from Methanosarcina barkeri (strain Fusaro / DSM 804).